Consider the following 360-residue polypeptide: MIDALYQAGLQLLPGGWWTGMVWPVLWILLKIVALLIPLMGAVAYLTLWERKLLGFMQVRHGPNRVGPWGLLQPIADALKLLTKEIIQPTAASRGLFVLGPVMAIMPALAAWVVIPFGPDVALANVNAGLLLVMAITSIEVYGVIIAGWASNSKYAFLGALRASAQMVSYEIAMGFCLLIVIMVSGSMNLTEIVLAQGRGVAAANGIGFLSWNWLPLLPVFLVYLISGVAETNRHPFDVVEGEAEIVAGHMVEYSGMGFAIFFLAEYASMWLVSILAALMFLGGWLPPVDSASLHWIPGWIWLGIKTCLVVSMFIWIRATFPRFRYDQIMRLGWKIFIPVTLACLLIAGGWLLSPWNIWK.

8 consecutive transmembrane segments (helical) span residues 20-40 (GMVW…IPLM), 95-115 (GLFV…WVVI), 130-150 (LLLV…AGWA), 176-196 (FCLL…IVLA), 206-226 (GIGF…VYLI), 261-281 (IFFL…ALMF), 297-317 (IPGW…FIWI), and 336-356 (IFIP…LSPW).

Belongs to the complex I subunit 1 family. NDH-1 is composed of 14 different subunits. Subunits NuoA, H, J, K, L, M, N constitute the membrane sector of the complex.

It localises to the cell inner membrane. It carries out the reaction a quinone + NADH + 5 H(+)(in) = a quinol + NAD(+) + 4 H(+)(out). Its function is as follows. NDH-1 shuttles electrons from NADH, via FMN and iron-sulfur (Fe-S) centers, to quinones in the respiratory chain. The immediate electron acceptor for the enzyme in this species is believed to be ubiquinone. Couples the redox reaction to proton translocation (for every two electrons transferred, four hydrogen ions are translocated across the cytoplasmic membrane), and thus conserves the redox energy in a proton gradient. This subunit may bind ubiquinone. The sequence is that of NADH-quinone oxidoreductase subunit H from Verminephrobacter eiseniae (strain EF01-2).